We begin with the raw amino-acid sequence, 390 residues long: Pyruvate dehydrogenase E1 component subunit alpha, somatic form, mitochondrial (390 aa).

Residues 1-29 (MRKMLAAVSRVLAGAAQKPASRVLVASRN) constitute a mitochondrion transit peptide. Lys-63 is modified (N6-acetyllysine; alternate). Position 63 is an N6-succinyllysine; alternate (Lys-63). 11 residues coordinate pyruvate: His-92, Tyr-118, Arg-119, Ala-157, Gly-165, Val-167, Asp-196, Gly-197, Ala-198, Asn-225, and Tyr-227. The thiamine diphosphate site is built by Tyr-118 and Arg-119. 6 residues coordinate thiamine diphosphate: Gly-165, Val-167, Asp-196, Gly-197, Ala-198, and Asn-225. Asp-196 contacts Mg(2+). Residues Asn-225 and Tyr-227 each contribute to the Mg(2+) site. Residue Ser-232 is modified to Phosphoserine; by PDK1. Lys-244 bears the N6-acetyllysine; alternate mark. Lys-244 is modified (N6-succinyllysine; alternate). The residue at position 267 (Lys-267) is an N6-acetyllysine. At Lys-277 the chain carries N6-succinyllysine. Residue His-292 coordinates thiamine diphosphate. Ser-293 carries the phosphoserine; by PDK1, PDK2, PDK3 and PDK4 modification. The residue at position 295 (Ser-295) is a Phosphoserine. Ser-300 is subject to Phosphoserine; by PDK1, PDK2, PDK3 and PDK4. A Phosphotyrosine modification is found at Tyr-301. N6-acetyllysine; alternate is present on Lys-313. At Lys-313 the chain carries N6-succinyllysine; alternate. 2 positions are modified to N6-acetyllysine: Lys-321 and Lys-336. Lys-385 is modified (N6-succinyllysine).

Heterotetramer of two PDHA1 and two PDHB subunits. The heterotetramer interacts with DLAT, and is part of the multimeric pyruvate dehydrogenase complex that contains multiple copies of pyruvate dehydrogenase (E1), dihydrolipoamide acetyltransferase (DLAT, E2) and lipoamide dehydrogenase (DLD, E3). These subunits are bound to an inner core composed of about 48 DLAT and 12 PDHX molecules. Thiamine diphosphate is required as a cofactor. It depends on Mg(2+) as a cofactor. Phosphorylation at Ser-232, Ser-293 and Ser-300 by PDK family kinases inactivates the enzyme; for this phosphorylation at a single site is sufficient. Phosphorylation at Ser-293 interferes with access to active site, and thereby inactivates the enzyme. Dephosphorylation at all three sites, i.e. at Ser-232, Ser-293 and Ser-300, is required for reactivation. In terms of processing, acetylation alters the phosphorylation pattern. Deacetylated by SIRT3. In all tissues, but in very low amount in testis.

The protein resides in the mitochondrion matrix. The catalysed reaction is N(6)-[(R)-lipoyl]-L-lysyl-[protein] + pyruvate + H(+) = N(6)-[(R)-S(8)-acetyldihydrolipoyl]-L-lysyl-[protein] + CO2. Pyruvate dehydrogenase activity is inhibited by phosphorylation of PDHA1; it is reactivated by dephosphorylation. In terms of biological role, the pyruvate dehydrogenase complex catalyzes the overall conversion of pyruvate to acetyl-CoA and CO(2), and thereby links the glycolytic pathway to the tricarboxylic cycle. The sequence is that of Pyruvate dehydrogenase E1 component subunit alpha, somatic form, mitochondrial (Pdha1) from Rattus norvegicus (Rat).